The sequence spans 181 residues: Isopentenyl-diphosphate Delta-isomerase (181 aa).

Positions 25 and 32 each coordinate Mn(2+). Residues 30–164 (PLHLAFSCWL…PWAFSPWMVM (135 aa)) enclose the Nudix hydrolase domain. Residue C67 is part of the active site. A Mg(2+)-binding site is contributed by C67. Position 69 (H69) interacts with Mn(2+). Residue E87 participates in Mg(2+) binding. Mn(2+) is bound by residues E114 and E116. E116 is a catalytic residue.

It belongs to the IPP isomerase type 1 family. As to quaternary structure, homodimer. Mg(2+) is required as a cofactor. It depends on Mn(2+) as a cofactor.

The protein localises to the cytoplasm. The catalysed reaction is isopentenyl diphosphate = dimethylallyl diphosphate. It participates in isoprenoid biosynthesis; dimethylallyl diphosphate biosynthesis; dimethylallyl diphosphate from isopentenyl diphosphate: step 1/1. In terms of biological role, catalyzes the 1,3-allylic rearrangement of the homoallylic substrate isopentenyl (IPP) to its highly electrophilic allylic isomer, dimethylallyl diphosphate (DMAPP). In Salmonella typhi, this protein is Isopentenyl-diphosphate Delta-isomerase.